A 537-amino-acid polypeptide reads, in one-letter code: Chaperonin GroEL 3 (537 aa).

ATP contacts are provided by residues 30–33 (TLGP), 87–91 (DGTTT), G414, 480–482 (DAL), and D496.

This sequence belongs to the chaperonin (HSP60) family. In terms of assembly, forms a cylinder of 14 subunits composed of two heptameric rings stacked back-to-back. Interacts with the co-chaperonin GroES.

The protein localises to the cytoplasm. The catalysed reaction is ATP + H2O + a folded polypeptide = ADP + phosphate + an unfolded polypeptide.. Functionally, together with its co-chaperonin GroES, plays an essential role in assisting protein folding. The GroEL-GroES system forms a nano-cage that allows encapsulation of the non-native substrate proteins and provides a physical environment optimized to promote and accelerate protein folding. The chain is Chaperonin GroEL 3 from Acaryochloris marina (strain MBIC 11017).